Consider the following 1047-residue polypeptide: tRNA wybutosine-synthesizing protein 4 (1047 aa).

S-adenosyl-L-methionine is bound by residues Arg69, Gly95, Asp122, 169–170 (DL), and Glu196. Residues 814–1003 (GRQYLRSISA…AAGRDVYGNR (190 aa)) form the JmjC domain.

This sequence belongs to the methyltransferase superfamily. LCMT family.

It carries out the reaction 7-[(3S)-3-amino-3-carboxypropyl]wyosine(37) in tRNA(Phe) + S-adenosyl-L-methionine = 7-[(3S)-(3-amino-3-methoxycarbonyl)propyl]wyosine(37) in tRNA(Phe) + S-adenosyl-L-homocysteine. The catalysed reaction is 7-[(3S)-(3-amino-3-methoxycarbonyl)propyl]wyosine(37) in tRNA(Phe) + S-adenosyl-L-methionine + CO2 = wybutosine(37) in tRNA(Phe) + S-adenosyl-L-homocysteine + 2 H(+). It functions in the pathway tRNA modification; wybutosine-tRNA(Phe) biosynthesis. Functionally, probable S-adenosyl-L-methionine-dependent methyltransferase that acts as a component of the wybutosine biosynthesis pathway. Wybutosine is a hyper modified guanosine with a tricyclic base found at the 3'-position adjacent to the anticodon of eukaryotic phenylalanine tRNA. May methylate the carboxyl group of leucine residues to form alpha-leucine ester residues. This is tRNA wybutosine-synthesizing protein 4 (ppm2) from Aspergillus fumigatus (strain ATCC MYA-4609 / CBS 101355 / FGSC A1100 / Af293) (Neosartorya fumigata).